Here is a 175-residue protein sequence, read N- to C-terminus: Chorismate pyruvate-lyase (175 aa).

Residues Met36, Arg78, Leu116, and Glu157 each coordinate substrate.

This sequence belongs to the UbiC family. As to quaternary structure, monomer.

It localises to the cytoplasm. The enzyme catalyses chorismate = 4-hydroxybenzoate + pyruvate. Its pathway is cofactor biosynthesis; ubiquinone biosynthesis. Removes the pyruvyl group from chorismate, with concomitant aromatization of the ring, to provide 4-hydroxybenzoate (4HB) for the ubiquinone pathway. The sequence is that of Chorismate pyruvate-lyase from Hamiltonella defensa subsp. Acyrthosiphon pisum (strain 5AT).